Consider the following 295-residue polypeptide: Putative 23S rRNA (guanine-N(1)-)-methyltransferase (295 aa).

Zn(2+)-binding residues include Cys-11, Cys-14, Cys-31, and His-35. S-adenosyl-L-methionine is bound by residues Tyr-74, 116–117 (TG), and His-204.

This sequence belongs to the methyltransferase superfamily. RlmA family.

In terms of biological role, confers strong resistance to mycinamicin (MM) and tylosin (TY). May function as methyltransferase. The polypeptide is Putative 23S rRNA (guanine-N(1)-)-methyltransferase (myrA) (Micromonospora griseorubida).